Reading from the N-terminus, the 166-residue chain is Small ribosomal subunit protein uS5 (166 aa).

Positions leucine 11–valine 74 constitute an S5 DRBM domain.

Belongs to the universal ribosomal protein uS5 family. In terms of assembly, part of the 30S ribosomal subunit. Contacts proteins S4 and S8.

Functionally, with S4 and S12 plays an important role in translational accuracy. Located at the back of the 30S subunit body where it stabilizes the conformation of the head with respect to the body. The protein is Small ribosomal subunit protein uS5 of Pectobacterium atrosepticum (strain SCRI 1043 / ATCC BAA-672) (Erwinia carotovora subsp. atroseptica).